We begin with the raw amino-acid sequence, 830 residues long: Penicillin-binding protein 1A (830 aa).

Over 1-18 (MGKKKKKRKSSAFKIILN) the chain is Cytoplasmic. A helical; Signal-anchor for type II membrane protein membrane pass occupies residues 19–39 (VFLSIFLVAGVAFGGIVFAMI). Residues 40-830 (KTAPPLNVQQ…QNHEDNKNKQ (791 aa)) are Extracellular-facing. The tract at residues 57–229 (SILYDDKGQY…PSVYYPYSSA (173 aa)) is transglycosylase. Glu96 (proton donor; for transglycosylase activity) is an active-site residue. Residues 357-641 (ASAVIMDYHN…AARLWGDIMK (285 aa)) are transpeptidase. Catalysis depends on Ser398, which acts as the Acyl-ester intermediate; for transpeptidase activity. The disordered stretch occupies residues 754–830 (GGSLPPTEEK…QNHEDNKNKQ (77 aa)). A compositionally biased stretch (basic and acidic residues) spans 760-786 (TEEKNNSNTRDKNKDKNKNKNKDKNPS). Low complexity predominate over residues 787-820 (QDKPNNNNNDNNSNNNNNNNDNNNNTKPPENDSN). Residues 821 to 830 (QNHEDNKNKQ) show a composition bias toward basic and acidic residues.

The protein in the N-terminal section; belongs to the glycosyltransferase 51 family. It in the C-terminal section; belongs to the transpeptidase family.

The protein resides in the cell membrane. It catalyses the reaction [GlcNAc-(1-&gt;4)-Mur2Ac(oyl-L-Ala-gamma-D-Glu-L-Lys-D-Ala-D-Ala)](n)-di-trans,octa-cis-undecaprenyl diphosphate + beta-D-GlcNAc-(1-&gt;4)-Mur2Ac(oyl-L-Ala-gamma-D-Glu-L-Lys-D-Ala-D-Ala)-di-trans,octa-cis-undecaprenyl diphosphate = [GlcNAc-(1-&gt;4)-Mur2Ac(oyl-L-Ala-gamma-D-Glu-L-Lys-D-Ala-D-Ala)](n+1)-di-trans,octa-cis-undecaprenyl diphosphate + di-trans,octa-cis-undecaprenyl diphosphate + H(+). The catalysed reaction is Preferential cleavage: (Ac)2-L-Lys-D-Ala-|-D-Ala. Also transpeptidation of peptidyl-alanyl moieties that are N-acyl substituents of D-alanine.. The protein operates within cell wall biogenesis; peptidoglycan biosynthesis. Its function is as follows. Cell wall formation. Synthesis of cross-linked peptidoglycan from the lipid intermediates. The enzyme has a penicillin-insensitive transglycosylase N-terminal domain (formation of linear glycan strands) and a penicillin-sensitive transpeptidase C-terminal domain (cross-linking of the peptide subunits). This Clostridium botulinum (strain Hall / ATCC 3502 / NCTC 13319 / Type A) protein is Penicillin-binding protein 1A (pbpA).